We begin with the raw amino-acid sequence, 442 residues long: Chromosomal replication initiator protein DnaA (442 aa).

The tract at residues methionine 1–glycine 75 is domain I, interacts with DnaA modulators. The domain II stretch occupies residues glycine 75–glycine 104. Residues asparagine 105–alanine 322 form a domain III, AAA+ region region. Glycine 150, glycine 152, lysine 153, and threonine 154 together coordinate ATP. The tract at residues asparagine 323–glutamate 442 is domain IV, binds dsDNA.

The protein belongs to the DnaA family. In terms of assembly, oligomerizes as a right-handed, spiral filament on DNA at oriC.

It is found in the cytoplasm. Its function is as follows. Plays an essential role in the initiation and regulation of chromosomal replication. ATP-DnaA binds to the origin of replication (oriC) to initiate formation of the DNA replication initiation complex once per cell cycle. Binds the DnaA box (a 9 base pair repeat at the origin) and separates the double-stranded (ds)DNA. Forms a right-handed helical filament on oriC DNA; dsDNA binds to the exterior of the filament while single-stranded (ss)DNA is stabiized in the filament's interior. The ATP-DnaA-oriC complex binds and stabilizes one strand of the AT-rich DNA unwinding element (DUE), permitting loading of DNA polymerase. After initiation quickly degrades to an ADP-DnaA complex that is not apt for DNA replication. Binds acidic phospholipids. The polypeptide is Chromosomal replication initiator protein DnaA (Xanthomonas campestris pv. campestris (strain 8004)).